We begin with the raw amino-acid sequence, 288 residues long: Probable syndecan (288 aa).

A signal peptide spans 1–26 (MILKLNFCLSTYSVLILLSLSTQAFA). Residues 27 to 231 (ANQAKTKVVP…ETLANGFYAA (205 aa)) lie on the Extracellular side of the membrane. Residues 67 to 175 (EVNGSGYPTD…NIHNDEDFFT (109 aa)) are disordered. A glycan (N-linked (GlcNAc...) asparagine) is linked at asparagine 69. O-linked (Xyl...) (glycosaminoglycan) serine glycans are attached at residues serine 71 and serine 86. The span at 89–104 (PPSSATTKSDKVTSPS) shows a compositional bias: polar residues. Low complexity predominate over residues 106 to 124 (AVVTAKPTTVPTTTASFKP). A compositionally biased stretch (acidic residues) spans 141–164 (VEEDEDDDEDEDEDDEDDEEDFAD). An O-linked (Xyl...) (glycosaminoglycan) serine glycan is attached at serine 214. Residues 232-252 (IAGGVLVAVITAILLVLFVVF) form a helical membrane-spanning segment. At 253 to 288 (RIRKKDEGSYALDEPKQARPYASYGYTKASTKEFYA) the chain is on the cytoplasmic side.

The protein belongs to the syndecan proteoglycan family.

Its subcellular location is the membrane. The protein resides in the cell surface. It is found in the cell junction. The protein localises to the cytoplasm. Functionally, cell surface proteoglycan that bears heparan sulfate. Required for correct mitotic spindle orientation of the ABar blastomere division plane and this may be through modulation of astral microtubule array, and in association with the wnt-signaling proteins mig-5 and dsh-2. Involved in the migration of AQR and PQR neurons, which descend from the Q neuroblasts. Promotes the axon guidance of D-type motor neurons. The protein is Probable syndecan of Caenorhabditis elegans.